The chain runs to 197 residues: Ribonuclease HII (197 aa).

The RNase H type-2 domain occupies glutamine 3–glycine 192. Aspartate 9, glutamate 10, and aspartate 101 together coordinate a divalent metal cation.

Belongs to the RNase HII family. Requires Mn(2+) as cofactor. Mg(2+) is required as a cofactor.

Its subcellular location is the cytoplasm. It catalyses the reaction Endonucleolytic cleavage to 5'-phosphomonoester.. In terms of biological role, endonuclease that specifically degrades the RNA of RNA-DNA hybrids. The polypeptide is Ribonuclease HII (Pseudoalteromonas atlantica (strain T6c / ATCC BAA-1087)).